Here is a 128-residue protein sequence, read N- to C-terminus: Large ribosomal subunit protein bL12 (128 aa).

This sequence belongs to the bacterial ribosomal protein bL12 family. In terms of assembly, homodimer. Part of the ribosomal stalk of the 50S ribosomal subunit. Forms a multimeric L10(L12)X complex, where L10 forms an elongated spine to which 2 to 4 L12 dimers bind in a sequential fashion. Binds GTP-bound translation factors.

Functionally, forms part of the ribosomal stalk which helps the ribosome interact with GTP-bound translation factors. Is thus essential for accurate translation. The chain is Large ribosomal subunit protein bL12 from Rubrobacter xylanophilus (strain DSM 9941 / JCM 11954 / NBRC 16129 / PRD-1).